The following is a 221-amino-acid chain: Urease accessory protein UreF (221 aa).

It belongs to the UreF family. As to quaternary structure, ureD, UreF and UreG form a complex that acts as a GTP-hydrolysis-dependent molecular chaperone, activating the urease apoprotein by helping to assemble the nickel containing metallocenter of UreC. The UreE protein probably delivers the nickel.

Its subcellular location is the cytoplasm. In terms of biological role, required for maturation of urease via the functional incorporation of the urease nickel metallocenter. The chain is Urease accessory protein UreF from Aliivibrio fischeri (strain ATCC 700601 / ES114) (Vibrio fischeri).